The following is a 1899-amino-acid chain: Protocadherin-15 (1899 aa).

The signal sequence occupies residues 1–26; sequence MLQQFCLWKWLAVGIAVATILASSLA. The Extracellular portion of the chain corresponds to 27–1376; it reads QNDEDCKLAR…AQAVGYTEGA (1350 aa). An intrachain disulfide couples C32 to C120. Cadherin domains follow at residues 38–147, 148–265, 278–395, 396–509, 510–616, 617–717, 719–819, 820–926, 927–1035, 1037–1144, and 1145–1259; these read GPPA…SPQF, QQQR…GPMF, RPLT…KPYF, TKST…SPTF, SNIS…PPRF, PQLM…GPVF, MFLP…SPVF, TNAS…SPVF, SKTL…IPRF, QDEY…APVF, and TKKM…PPTL. A helical transmembrane segment spans residues 1377-1397; that stretch reads LLALAVIIILCCMPAILIVMV. At 1398–1899 the chain is on the cytoplasmic side; it reads SYRQRQAECA…KRFPSQSTAL (502 aa). 3 disordered regions span residues 1668–1687, 1700–1721, and 1734–1820; these read SPCL…VVEP, HDYP…SFRI, and TKGE…RREL. Composition is skewed to pro residues over residues 1706–1717 and 1743–1773; these read LSPPPTRKPTPP and PDPP…PPTL. Residues 1774–1791 are compositionally biased toward low complexity; the sequence is PLASVPSSSSLPSTQHLS. Residues 1804-1814 are compositionally biased toward pro residues; it reads AVPPPAAVPEP.

In terms of tissue distribution, in the utricle, localizes to the distal region of the kinocilium and near the tips of the stereocilia.

The protein resides in the cell membrane. In terms of biological role, calcium-dependent cell-adhesion protein. Required for inner ear neuroepithelial cell elaboration and cochlear function. Probably involved in the maintenance of normal retinal function. In Gallus gallus (Chicken), this protein is Protocadherin-15 (Pcdh15).